A 231-amino-acid chain; its full sequence is Small proline-rich protein 3 (231 aa).

A disordered region spans residues 1 to 104; sequence MSSYQQKQPF…GSGYSVVPQP (104 aa). Serine 2 carries the N-acetylserine modification. 21 consecutive repeat copies span residues 55–62, 63–70, 71–78, 79–86, 87–94, 95–102, 103–110, 111–118, 119–126, 127–134, 135–142, 143–150, 151–158, 159–166, 167–174, 175–182, 183–190, 191–198, 199–206, 207–214, and 215–222. Residues 55-222 form a 21 X 8 AA approximate tandem repeats region; sequence EQGYVKIPEQ…VQEPNPSIVT (168 aa). The segment covering 80–94 has biased composition (polar residues); sequence SGNTKVPESGCTSVP. The tract at residues 188–231 is disordered; it reads KVPESGCTSVPGPGYPTVPQPGYTKVQEPNPSIVTPGLSQKKTK. The segment covering 214-231 has biased composition (polar residues); it reads QEPNPSIVTPGLSQKKTK.

Belongs to the cornifin (SPRR) family. As to expression, suprabasal layers of the squamous epithelia of esophagus, tongue and oral mucosa.

The protein localises to the cytoplasm. Can serve as a substrate in transglutaminase-catalyzed cross linking reactions and can function as a cross-linked envelope precursor. The protein is Small proline-rich protein 3 (SPRR3) of Oryctolagus cuniculus (Rabbit).